The primary structure comprises 199 residues: Tumor protein p53-inducible nuclear protein 2 (199 aa).

The short motif at 26–41 (VSEEDEVDGWLIIDLQ) is the LIR element. Disordered stretches follow at residues 41 to 69 (QDSY…LMDE), 117 to 153 (LESG…LHHA), and 173 to 199 (LQRA…ARES). Over residues 47–64 (PPDPRASPAPAGRPPPAP) the composition is skewed to pro residues. A Phosphoserine modification is found at Ser-136.

As to quaternary structure, interacts with VMP1, GABARAP, GABARAPL1, GABARAPL2, MAP1LC3A, MAP1LC3B, MAP1LC3C and THRA. In terms of tissue distribution, abundantly expressed in skeletal muscle and heart and expression is highly repressed in muscle from obese diabetic rats.

It is found in the cytoplasm. The protein resides in the cytosol. It localises to the nucleus. Its subcellular location is the PML body. The protein localises to the cytoplasmic vesicle. It is found in the autophagosome. In terms of biological role, dual regulator of transcription and autophagy. Positively regulates autophagy and is required for autophagosome formation and processing. May act as a scaffold protein that recruits MAP1LC3A, GABARAP and GABARAPL2 and brings them to the autophagosome membrane by interacting with VMP1 where, in cooperation with the BECN1-PI3-kinase class III complex, they trigger autophagosome development. Acts as a transcriptional activator of THRA. This Rattus norvegicus (Rat) protein is Tumor protein p53-inducible nuclear protein 2 (Tp53inp2).